The following is a 494-amino-acid chain: Guanosine-5'-triphosphate,3'-diphosphate pyrophosphatase (494 aa).

It belongs to the GppA/Ppx family. GppA subfamily.

The catalysed reaction is guanosine 3'-diphosphate 5'-triphosphate + H2O = guanosine 3',5'-bis(diphosphate) + phosphate + H(+). It functions in the pathway purine metabolism; ppGpp biosynthesis; ppGpp from GTP: step 2/2. Functionally, catalyzes the conversion of pppGpp to ppGpp. Guanosine pentaphosphate (pppGpp) is a cytoplasmic signaling molecule which together with ppGpp controls the 'stringent response', an adaptive process that allows bacteria to respond to amino acid starvation, resulting in the coordinated regulation of numerous cellular activities. This chain is Guanosine-5'-triphosphate,3'-diphosphate pyrophosphatase, found in Escherichia coli O6:H1 (strain CFT073 / ATCC 700928 / UPEC).